The primary structure comprises 82 residues: ATP synthase subunit c, chloroplastic (82 aa).

2 consecutive transmembrane segments (helical) span residues 3 to 23 (PLISAASVLAAGLAVGLASIG) and 57 to 77 (FAFMESLTIYGLVVALALLFA).

Belongs to the ATPase C chain family. F-type ATPases have 2 components, F(1) - the catalytic core - and F(0) - the membrane proton channel. F(1) has five subunits: alpha(3), beta(3), gamma(1), delta(1), epsilon(1). F(0) has four main subunits: a(1), b(1), b'(1) and c(10-14). The alpha and beta chains form an alternating ring which encloses part of the gamma chain. F(1) is attached to F(0) by a central stalk formed by the gamma and epsilon chains, while a peripheral stalk is formed by the delta, b and b' chains.

It localises to the plastid. The protein localises to the chloroplast thylakoid membrane. Its function is as follows. F(1)F(0) ATP synthase produces ATP from ADP in the presence of a proton or sodium gradient. F-type ATPases consist of two structural domains, F(1) containing the extramembraneous catalytic core and F(0) containing the membrane proton channel, linked together by a central stalk and a peripheral stalk. During catalysis, ATP synthesis in the catalytic domain of F(1) is coupled via a rotary mechanism of the central stalk subunits to proton translocation. In terms of biological role, key component of the F(0) channel; it plays a direct role in translocation across the membrane. A homomeric c-ring of between 10-14 subunits forms the central stalk rotor element with the F(1) delta and epsilon subunits. The chain is ATP synthase subunit c, chloroplastic from Mesostigma viride (Green alga).